We begin with the raw amino-acid sequence, 381 residues long: Probable peptidoglycan glycosyltransferase FtsW (381 aa).

Topologically, residues 1 to 15 (MNNKKKIVKIFFYDK) are cytoplasmic. Residues 16–36 (ILFFLLISLSIIGIIIVSSAS) traverse the membrane as a helical segment. Residues 37-53 (ISFGIRLHNDYFYFAKR) are Periplasmic-facing. Residues 54–74 (NLLYFFLSFFLFFQIIRIPIN) traverse the membrane as a helical segment. Residues 75–81 (QLEKYNK) lie on the Cytoplasmic side of the membrane. Residues 82–102 (IALLINLFLLIIVFIIGNSIN) traverse the membrane as a helical segment. Over 103-109 (GAIRWIK) the chain is Periplasmic. Residues 110 to 130 (IGFFSIQPSECSKLILFFYIS) traverse the membrane as a helical segment. Residues 131–143 (DYIVKKNKELKNK) are Cytoplasmic-facing. Residues 144-164 (LWGFLKPIIIMLIFVILLLMQ) traverse the membrane as a helical segment. The Periplasmic segment spans residues 165–166 (PD). 2 helical membrane passes run 167–187 (LGNS…AGIN) and 188–208 (LWKC…LIIF). Over 209-278 (KPYRIRRILS…FSILGEELGY (70 aa)) the chain is Periplasmic. A helical transmembrane segment spans residues 279–299 (IGSIIILIMLFFVIFRIFLIG). Topologically, residues 300-317 (KNSFIQKKFFSGYFSFSV) are cytoplasmic. The helical transmembrane segment at 318–338 (GIWISLQTIMNVGGVIGILPI) threads the bilayer. The Periplasmic portion of the chain corresponds to 339-343 (KGLTL). A helical transmembrane segment spans residues 344-364 (PFISYGGSSLITIFSAIAIVI). At 365-381 (RSDFELRINKYQAYLKQ) the chain is on the cytoplasmic side.

This sequence belongs to the SEDS family. FtsW subfamily.

It localises to the cell inner membrane. The catalysed reaction is [GlcNAc-(1-&gt;4)-Mur2Ac(oyl-L-Ala-gamma-D-Glu-L-Lys-D-Ala-D-Ala)](n)-di-trans,octa-cis-undecaprenyl diphosphate + beta-D-GlcNAc-(1-&gt;4)-Mur2Ac(oyl-L-Ala-gamma-D-Glu-L-Lys-D-Ala-D-Ala)-di-trans,octa-cis-undecaprenyl diphosphate = [GlcNAc-(1-&gt;4)-Mur2Ac(oyl-L-Ala-gamma-D-Glu-L-Lys-D-Ala-D-Ala)](n+1)-di-trans,octa-cis-undecaprenyl diphosphate + di-trans,octa-cis-undecaprenyl diphosphate + H(+). It participates in cell wall biogenesis; peptidoglycan biosynthesis. In terms of biological role, peptidoglycan polymerase that is essential for cell division. The sequence is that of Probable peptidoglycan glycosyltransferase FtsW from Wigglesworthia glossinidia brevipalpis.